The chain runs to 340 residues: Glycerol-3-phosphate dehydrogenase [NAD(P)+] (340 aa).

Positions 14, 15, 35, and 108 each coordinate NADPH. Positions 108 and 136 each coordinate sn-glycerol 3-phosphate. Alanine 140 provides a ligand contact to NADPH. The sn-glycerol 3-phosphate site is built by lysine 191, aspartate 244, serine 254, arginine 255, and asparagine 256. The active-site Proton acceptor is the lysine 191. An NADPH-binding site is contributed by arginine 255. Positions 279 and 281 each coordinate NADPH.

It belongs to the NAD-dependent glycerol-3-phosphate dehydrogenase family.

Its subcellular location is the cytoplasm. The enzyme catalyses sn-glycerol 3-phosphate + NAD(+) = dihydroxyacetone phosphate + NADH + H(+). It carries out the reaction sn-glycerol 3-phosphate + NADP(+) = dihydroxyacetone phosphate + NADPH + H(+). The protein operates within membrane lipid metabolism; glycerophospholipid metabolism. In terms of biological role, catalyzes the reduction of the glycolytic intermediate dihydroxyacetone phosphate (DHAP) to sn-glycerol 3-phosphate (G3P), the key precursor for phospholipid synthesis. This Azotobacter vinelandii (strain DJ / ATCC BAA-1303) protein is Glycerol-3-phosphate dehydrogenase [NAD(P)+].